Reading from the N-terminus, the 500-residue chain is Bifunctional protein GlmU (500 aa).

Residues 1 to 242 form a pyrophosphorylase region; it reads MPVQTAVVVL…SAKVAGANDR (242 aa). UDP-N-acetyl-alpha-D-glucosamine contacts are provided by residues 10–13, lysine 24, glutamine 81, and 86–87; these read LAAG and GT. Aspartate 112 provides a ligand contact to Mg(2+). Residues glycine 151, glutamate 167, asparagine 182, and asparagine 240 each contribute to the UDP-N-acetyl-alpha-D-glucosamine site. Position 240 (asparagine 240) interacts with Mg(2+). The segment at 243 to 263 is linker; that stretch reads VQLSRLAAELNRRTVENWMRA. Positions 264–500 are N-acetyltransferase; that stretch reads GVTVVDPSTT…KQDLKDGIEQ (237 aa). UDP-N-acetyl-alpha-D-glucosamine contacts are provided by arginine 345 and lysine 363. Histidine 375 functions as the Proton acceptor in the catalytic mechanism. Positions 378 and 389 each coordinate UDP-N-acetyl-alpha-D-glucosamine. Acetyl-CoA-binding positions include alanine 392, 398–399, serine 417, and alanine 435; that span reads NY. Residues 472–500 are disordered; that stretch reads AEAAAAAGLHHSSDLHETEKQDLKDGIEQ. The span at 482 to 500 shows a compositional bias: basic and acidic residues; sequence HSSDLHETEKQDLKDGIEQ.

It in the N-terminal section; belongs to the N-acetylglucosamine-1-phosphate uridyltransferase family. In the C-terminal section; belongs to the transferase hexapeptide repeat family. In terms of assembly, homotrimer. Requires Mg(2+) as cofactor.

It is found in the cytoplasm. The catalysed reaction is alpha-D-glucosamine 1-phosphate + acetyl-CoA = N-acetyl-alpha-D-glucosamine 1-phosphate + CoA + H(+). It catalyses the reaction N-acetyl-alpha-D-glucosamine 1-phosphate + UTP + H(+) = UDP-N-acetyl-alpha-D-glucosamine + diphosphate. It participates in nucleotide-sugar biosynthesis; UDP-N-acetyl-alpha-D-glucosamine biosynthesis; N-acetyl-alpha-D-glucosamine 1-phosphate from alpha-D-glucosamine 6-phosphate (route II): step 2/2. Its pathway is nucleotide-sugar biosynthesis; UDP-N-acetyl-alpha-D-glucosamine biosynthesis; UDP-N-acetyl-alpha-D-glucosamine from N-acetyl-alpha-D-glucosamine 1-phosphate: step 1/1. It functions in the pathway bacterial outer membrane biogenesis; LPS lipid A biosynthesis. In terms of biological role, catalyzes the last two sequential reactions in the de novo biosynthetic pathway for UDP-N-acetylglucosamine (UDP-GlcNAc). The C-terminal domain catalyzes the transfer of acetyl group from acetyl coenzyme A to glucosamine-1-phosphate (GlcN-1-P) to produce N-acetylglucosamine-1-phosphate (GlcNAc-1-P), which is converted into UDP-GlcNAc by the transfer of uridine 5-monophosphate (from uridine 5-triphosphate), a reaction catalyzed by the N-terminal domain. The sequence is that of Bifunctional protein GlmU from Rhodococcus jostii (strain RHA1).